The primary structure comprises 1207 residues: Brassinosteroid LRR receptor kinase (1207 aa).

Positions 1–34 are cleaved as a signal peptide; the sequence is MKAHKTVFNQHPLSLNKLFFVLLLIFFLPPASPA. A Cys pair 1 motif is present at residues 71-78; sequence CSFTGVSC. LRR repeat units lie at residues 109–131, 135–157, 161–181, 186–207, 213–234, 235–257, 258–280, 282–304, 305–325, 329–350, 353–374, 378–400, 402–423, 428–450, 452–474, 476–499, 500–523, 524–547, 548–570, and 572–594; these read NLES…AKSQ, TLDS…SSFG, NLKS…EMLK, SLQV…PWVS, ELEF…LDFK, NLSY…KDCS, NLQH…LSSC, KLSF…PSES, LQYL…QLAD, TVVE…SLGE, SLEL…DTLS, NIKT…FSNL, KLET…GICK, NLKV…LSNC, QLVS…LGSL, KLKD…MYLQ, ALEN…SNCT, KLNW…GRLS, NLAI…LGNC, and SLIW…LFKQ. Residue N119 is glycosylated (N-linked (GlcNAc...) asparagine). Residues N166 and N196 are each glycosylated (N-linked (GlcNAc...) asparagine). Residues N235 and N245 are each glycosylated (N-linked (GlcNAc...) asparagine). N287 carries N-linked (GlcNAc...) asparagine glycosylation. 2 N-linked (GlcNAc...) asparagine glycosylation sites follow: N339 and N363. N-linked (GlcNAc...) asparagine glycans are attached at residues N412 and N449. N521 carries an N-linked (GlcNAc...) asparagine glycan. 4 N-linked (GlcNAc...) asparagine glycosylation sites follow: N556, N584, N646, and N662. 4 LRR repeats span residues 664 to 686, 688 to 711, 712 to 735, and 736 to 758; these read SMIF…LGAM, YLSI…GGLK, NVAI…TSLT, and LLGE…APFD. N-linked (GlcNAc...) asparagine glycosylation is found at N724, N746, and N767. Residues 771–779 carry the Cys pair 2 motif; sequence CGYPLPIPC. Residues 803 to 823 traverse the membrane as a helical segment; the sequence is SVAMGLLFSLFCIFGLIIVAI. A Protein kinase domain is found at 888-1163; the sequence is FHNDSLVGSG…IQVMAMFKEI (276 aa). ATP-binding positions include 894–902 and K916; that span reads VGSGGFGDV. D1014 serves as the catalytic Proton acceptor.

The protein belongs to the protein kinase superfamily. Ser/Thr protein kinase family.

The protein resides in the cell membrane. The enzyme catalyses L-seryl-[protein] + ATP = O-phospho-L-seryl-[protein] + ADP + H(+). The catalysed reaction is L-threonyl-[protein] + ATP = O-phospho-L-threonyl-[protein] + ADP + H(+). In terms of biological role, receptor with a serine/threonine-protein kinase activity. Regulates, in response to brassinosteroid binding, a signaling cascade involved in plant development, including expression of light- and stress-regulated genes, promotion of cell elongation, normal leaf and chloroplast senescence, and flowering. May be involved in a feedback regulation of brassinosteroid biosynthesis. May be also involved in the perception of systemin, a peptide hormone responsible for the systemic activation of defense genes in leaves of wounded plants. The protein is Brassinosteroid LRR receptor kinase (CURL3) of Solanum lycopersicum (Tomato).